The sequence spans 381 residues: Chorismate synthase (381 aa).

Positions 41 and 47 each coordinate NADP(+). FMN-binding positions include 127 to 129 (RAS), 247 to 248 (QA), Gly291, 306 to 310 (KPIPT), and Arg332.

It belongs to the chorismate synthase family. In terms of assembly, homotetramer. The cofactor is FMNH2.

The enzyme catalyses 5-O-(1-carboxyvinyl)-3-phosphoshikimate = chorismate + phosphate. The protein operates within metabolic intermediate biosynthesis; chorismate biosynthesis; chorismate from D-erythrose 4-phosphate and phosphoenolpyruvate: step 7/7. Functionally, catalyzes the anti-1,4-elimination of the C-3 phosphate and the C-6 proR hydrogen from 5-enolpyruvylshikimate-3-phosphate (EPSP) to yield chorismate, which is the branch point compound that serves as the starting substrate for the three terminal pathways of aromatic amino acid biosynthesis. This reaction introduces a second double bond into the aromatic ring system. The protein is Chorismate synthase of Anaeromyxobacter dehalogenans (strain 2CP-1 / ATCC BAA-258).